Here is a 250-residue protein sequence, read N- to C-terminus: Hydroxyacylglutathione hydrolase (250 aa).

Residues H52, H54, D56, H57, H107, D128, and H166 each contribute to the Zn(2+) site.

The protein belongs to the metallo-beta-lactamase superfamily. Glyoxalase II family. Monomer. Requires Zn(2+) as cofactor.

It catalyses the reaction an S-(2-hydroxyacyl)glutathione + H2O = a 2-hydroxy carboxylate + glutathione + H(+). Its pathway is secondary metabolite metabolism; methylglyoxal degradation; (R)-lactate from methylglyoxal: step 2/2. Thiolesterase that catalyzes the hydrolysis of S-D-lactoyl-glutathione to form glutathione and D-lactic acid. This Neisseria gonorrhoeae (strain ATCC 700825 / FA 1090) protein is Hydroxyacylglutathione hydrolase.